The primary structure comprises 253 residues: 5-oxoprolinase subunit A (253 aa).

The protein belongs to the LamB/PxpA family. In terms of assembly, forms a complex composed of PxpA, PxpB and PxpC.

The catalysed reaction is 5-oxo-L-proline + ATP + 2 H2O = L-glutamate + ADP + phosphate + H(+). Catalyzes the cleavage of 5-oxoproline to form L-glutamate coupled to the hydrolysis of ATP to ADP and inorganic phosphate. The chain is 5-oxoprolinase subunit A from Shouchella clausii (strain KSM-K16) (Alkalihalobacillus clausii).